Consider the following 686-residue polypeptide: Eomesodermin homolog (686 aa).

The segment at 27–46 is disordered; the sequence is GGSGGSAGHLPSAAPSPQKL. The segment covering 34–43 has biased composition (low complexity); it reads GHLPSAAPSP. At S107 the chain carries Phosphoserine. The T-box DNA-binding region spans 276-456; it reads LWLKFHRHQT…HNPFAKGFRD (181 aa). Positions 571 to 686 are required for transcription activation; the sequence is AMAGWGGRGS…GGYYAFYTTP (116 aa). A disordered region spans residues 639–686; it reads ACKRRRLSPSNSSNENSPSIKCEDINAEEYSKDTSKGMGGYYAFYTTP. Over residues 646–657 the composition is skewed to low complexity; the sequence is SPSNSSNENSPS. The span at 659 to 673 shows a compositional bias: basic and acidic residues; sequence KCEDINAEEYSKDTS.

As to expression, expressed in CD8+ T-cells.

The protein localises to the nucleus. Functionally, functions as a transcriptional activator playing a crucial role during development. Functions in trophoblast differentiation and later in gastrulation, regulating both mesoderm delamination and endoderm specification. Plays a role in brain development being required for the specification and the proliferation of the intermediate progenitor cells and their progeny in the cerebral cortex. Required for differentiation and migration of unipolar dendritic brush cells. Also involved in the differentiation of CD8+ T-cells during immune response regulating the expression of lytic effector genes. This Homo sapiens (Human) protein is Eomesodermin homolog (EOMES).